A 334-amino-acid polypeptide reads, in one-letter code: 4-hydroxyproline 2-epimerase (334 aa).

Residue cysteine 91 is the Proton acceptor of the active site. Residues 92–93 (GH), histidine 224, and aspartate 250 each bind substrate. The active-site Proton donor is cysteine 254. 255–256 (GT) is a binding site for substrate.

This sequence belongs to the proline racemase family.

It carries out the reaction trans-4-hydroxy-L-proline = cis-4-hydroxy-D-proline. Catalyzes the epimerization of trans-4-hydroxy-L-proline (t4LHyp) to cis-4-hydroxy-D-proline (c4DHyp). Is likely involved in a degradation pathway that converts t4LHyp to alpha-ketoglutarate. Displays no proline racemase activity. This chain is 4-hydroxyproline 2-epimerase, found in Spirosoma linguale (strain ATCC 33905 / DSM 74 / LMG 10896 / Claus 1).